The sequence spans 321 residues: Fe-S cluster assembly protein DRE2 (321 aa).

Residues 1–140 form an N-terminal SAM-like domain region; the sequence is MNNTAHSMSE…RRPASSSVAE (140 aa). Polar residues predominate over residues 128–138; the sequence is IESRRPASSSV. The interval 128 to 166 is disordered; it reads IESRRPASSSVAEKDSTASSGMGAVKLRRKPNENGGHQQ. The linker stretch occupies residues 140–177; that stretch reads EKDSTASSGMGAVKLRRKPNENGGHQQKKALLWATQPE. Residues cysteine 202, cysteine 217, cysteine 220, and cysteine 222 each coordinate [2Fe-2S] cluster. The tract at residues 202 to 222 is fe-S binding site A; the sequence is CTVDFSAPRTRRKRACKGCTC. The tract at residues 239–263 is disordered; sequence QLDPSEVGGTGGKRTEVTTTVKGPN. [4Fe-4S] cluster-binding residues include cysteine 283, cysteine 286, cysteine 294, and cysteine 297. 2 short sequence motifs (cx2C motif) span residues 283 to 286 and 294 to 297; these read CGSC and CSSC. Positions 283–297 are fe-S binding site B; it reads CGSCFLGDAFRCSSC.

This sequence belongs to the anamorsin family. In terms of assembly, monomer. Interacts with TAH18. Interacts with MIA40. The cofactor is [2Fe-2S] cluster. [4Fe-4S] cluster is required as a cofactor.

The protein resides in the cytoplasm. The protein localises to the mitochondrion intermembrane space. Component of the cytosolic iron-sulfur (Fe-S) protein assembly (CIA) machinery required for the maturation of extramitochondrial Fe-S proteins. Part of an electron transfer chain functioning in an early step of cytosolic Fe-S biogenesis, facilitating the de novo assembly of a [4Fe-4S] cluster on the scaffold complex CFD1-NBP35. Electrons are transferred to DRE2 from NADPH via the FAD- and FMN-containing protein TAH18. TAH18-DRE2 are also required for the assembly of the diferric tyrosyl radical cofactor of ribonucleotide reductase (RNR), probably by providing electrons for reduction during radical cofactor maturation in the catalytic small subunit RNR2. The protein is Fe-S cluster assembly protein DRE2 of Malassezia globosa (strain ATCC MYA-4612 / CBS 7966) (Dandruff-associated fungus).